A 90-amino-acid polypeptide reads, in one-letter code: Putative antitoxin VapB8 (90 aa).

A disordered region spans residues 1–56; that stretch reads MEKSRCHAVAHGGGCAGSAKSHKSGGRCGQGRGAGDSHGTRGAGRRYRAASAPHPL. Residues 26–36 are compositionally biased toward gly residues; it reads GRCGQGRGAGD.

Functionally, antitoxin component of a possible type II toxin-antitoxin (TA) system. The cognate toxin is VapC8. The sequence is that of Putative antitoxin VapB8 (vapB8) from Mycobacterium tuberculosis (strain ATCC 25618 / H37Rv).